Consider the following 242-residue polypeptide: Probable transcriptional regulatory protein Csac_0964 (242 aa).

Residues 1–20 (MSGHSKWANIRHKKEKTDAQ) form a disordered region.

This sequence belongs to the TACO1 family.

The protein localises to the cytoplasm. This chain is Probable transcriptional regulatory protein Csac_0964, found in Caldicellulosiruptor saccharolyticus (strain ATCC 43494 / DSM 8903 / Tp8T 6331).